The following is a 319-amino-acid chain: MATH domain and coiled-coil domain-containing protein At3g58200 (319 aa).

Residues 6 to 132 form the MATH domain; sequence DNKFRWVIKN…NEEVKIVVEV (127 aa). Positions 255 to 302 form a coiled coil; it reads FKVDWLEKKLEEVKEKKKEEQIGETRMQEMKVFKQKCSDIEALMEREK.

In Arabidopsis thaliana (Mouse-ear cress), this protein is MATH domain and coiled-coil domain-containing protein At3g58200.